A 940-amino-acid polypeptide reads, in one-letter code: MSDYKFTLNLPETEFPMRGNLANREPEMLERWTKDGLYQQIRDSRIGRTPFILHDGPPYANGSIHIGHSVNKILKDIIVKSKTMSGFDAPYVPGWDCHGLPIELKVEQKVGKPGQKISAAEFREECRKYAAEQVNGQREDFIRLGVLGDWQNPYLTMDFSTEANIVRSLSKVIESGHLHKGVKPVHWCTDCGSALAEAEVEYEDKTSPAIDVAFVAADSKAVAAKFGVSDYSHPVSMVIWTTTPWTLPANRALSLSPELDYSLVEFEKDGVTQALILAEVLVESCLTRYNVESHTVLGSAKGAAFELVRFNHPFLDFDVPAILGDHVTTDAGTGIVHTAPGHGQDDFVVGQKYGLEVANPVGDNGVYKPDTEYFAGQHVFKANDNVVALLREKSALLNHVAYRHSYPHCWRHKTPIIFRATPQWFISMDNHGLRTQALKEIEQTQWIPDWGQSRIEKMVENRPDWCISRQRTWGVPITLFVNRETEELHPDSVSLMERVASRIEQQGIQAWWDLDAAELLGDEAEQYRKVTDTLDVWFDSGSTFSSVVAARPEFHGHGVDLYLEGSDQHRGWFMSSLMISTAMNGKAPYKQVLTHGFTVDGKGRKMSKSIGNVIAPQTVTNKLGADILRLWVAATDYSGEMTVSDEILNRSADAYRRIRNTARFLLANLNGFEPAKDLVAVEDMVALDRWVVRRAAALQQEIIEAYEQYNFHIVTQKLMQFCSVELGSFYLDIIKDRQYTAKQEGHARRSCQSALYLISEAMVRWIAPILSFTADEVWQLLPGERDAYVFTQEWYQGLKSVTLATDLSDDYWQQLLTVRNEVNKVIEQARRDKRIGGSLEAEVTLFADAALTEQLTHIGDELRFVLLTSEAKVLPLADATSEAVETELASLKLLVASSTAEKCERCWHHREEVGTIEAHPTLCTRCVTNIEGDGEVRLFA.

The 'HIGH' region motif lies at 58–68 (PYANGSIHIGH). E564 serves as a coordination point for L-isoleucyl-5'-AMP. The 'KMSKS' region signature appears at 605–609 (KMSKS). Position 608 (K608) interacts with ATP. Zn(2+)-binding residues include C903, C906, C923, and C926.

This sequence belongs to the class-I aminoacyl-tRNA synthetase family. IleS type 1 subfamily. Monomer. Zn(2+) is required as a cofactor.

The protein localises to the cytoplasm. The catalysed reaction is tRNA(Ile) + L-isoleucine + ATP = L-isoleucyl-tRNA(Ile) + AMP + diphosphate. Its function is as follows. Catalyzes the attachment of isoleucine to tRNA(Ile). As IleRS can inadvertently accommodate and process structurally similar amino acids such as valine, to avoid such errors it has two additional distinct tRNA(Ile)-dependent editing activities. One activity is designated as 'pretransfer' editing and involves the hydrolysis of activated Val-AMP. The other activity is designated 'posttransfer' editing and involves deacylation of mischarged Val-tRNA(Ile). In Shewanella baltica (strain OS155 / ATCC BAA-1091), this protein is Isoleucine--tRNA ligase.